The following is a 528-amino-acid chain: Protein WHAT'S THIS FACTOR 1 homolog, chloroplastic (528 aa).

A chloroplast-targeting transit peptide spans 1-73 (MEPKLLLSAH…KTRVVVEPVR (73 aa)). Residues 80 to 408 (KELTFDSVVQ…VKEKMRALVS (329 aa)) form the PORR domain. The disordered stretch occupies residues 410–528 (PRFPRRGGPR…FPDGTPREKW (119 aa)). The segment covering 418-428 (PRKDEEGREVE) has biased composition (basic and acidic residues). A compositionally biased stretch (acidic residues) spans 429 to 491 (IDGSDADGEE…DDDDEDEEED (63 aa)).

The protein localises to the plastid. It is found in the chloroplast. Functionally, RNA-binding protein involved in group II intron splicing. Binds specific group II introns and promotes their splicing. Functions in the context of a heterodimer with the ribonuclease III domain-containing protein RNC1. The sequence is that of Protein WHAT'S THIS FACTOR 1 homolog, chloroplastic from Arabidopsis thaliana (Mouse-ear cress).